A 514-amino-acid polypeptide reads, in one-letter code: 2,3-bisphosphoglycerate-independent phosphoglycerate mutase (514 aa).

Residues Asp-14 and Ser-64 each contribute to the Mn(2+) site. Catalysis depends on Ser-64, which acts as the Phosphoserine intermediate. Substrate contacts are provided by residues His-125, 155-156, Arg-187, Arg-193, 263-266, and Lys-336; these read RD and RADR. Mn(2+)-binding residues include Asp-403, His-407, Asp-444, His-445, and His-463.

This sequence belongs to the BPG-independent phosphoglycerate mutase family. As to quaternary structure, monomer. It depends on Mn(2+) as a cofactor.

It catalyses the reaction (2R)-2-phosphoglycerate = (2R)-3-phosphoglycerate. It participates in carbohydrate degradation; glycolysis; pyruvate from D-glyceraldehyde 3-phosphate: step 3/5. Functionally, catalyzes the interconversion of 2-phosphoglycerate and 3-phosphoglycerate. This is 2,3-bisphosphoglycerate-independent phosphoglycerate mutase from Escherichia coli O6:H1 (strain CFT073 / ATCC 700928 / UPEC).